The chain runs to 353 residues: MRHISSLLQGLARSLSVGKERKGGDGDDGKAAAATATAVLRTSGTLWGEGSETFAAVCSRRGEKGINQDCSIVCEGFGCEEGSVLCGIFDGHGQWGHYVAKAVRESLPPALLRRWREAVTLAALIDGGEKRLCECRPDLWRQSYLAACAAVDAELRASRRLDAVHSGCTALSLVKHGDLLVVANVGDSRAVLATASPDDGGGARLAAVQLTVDFKPNLPQERERIMECNGRVQCLADEPGVHRVWRPDREGPGLAMSRAFGDYCVKDYGVISAPEVTHRRITAQDHFVILATDGVWDVVSNEEAVQIVASAPEREKAAKRLVEFAVRAWRRKRRGIAVDDCSAICLFFHSPPS.

The PPM-type phosphatase domain maps to 54–348 (FAAVCSRRGE…DDCSAICLFF (295 aa)). Positions 90, 91, 293, and 339 each coordinate Mn(2+).

This sequence belongs to the PP2C family. The cofactor is Mg(2+). Requires Mn(2+) as cofactor.

The enzyme catalyses O-phospho-L-seryl-[protein] + H2O = L-seryl-[protein] + phosphate. The catalysed reaction is O-phospho-L-threonyl-[protein] + H2O = L-threonyl-[protein] + phosphate. The chain is Probable protein phosphatase 2C 48 from Oryza sativa subsp. japonica (Rice).